Here is a 117-residue protein sequence, read N- to C-terminus: Large ribosomal subunit protein eL34 (117 aa).

At serine 12 the chain carries Phosphoserine. 2 positions are modified to N6-acetyllysine: lysine 36 and lysine 43. Lysine 108 participates in a covalent cross-link: Glycyl lysine isopeptide (Lys-Gly) (interchain with G-Cter in SUMO2).

The protein belongs to the eukaryotic ribosomal protein eL34 family. In terms of assembly, component of the large ribosomal subunit.

Its subcellular location is the cytoplasm. It localises to the cytosol. The protein localises to the endoplasmic reticulum. Its function is as follows. Component of the large ribosomal subunit. The ribosome is a large ribonucleoprotein complex responsible for the synthesis of proteins in the cell. The sequence is that of Large ribosomal subunit protein eL34 (RPL34) from Sus scrofa (Pig).